Reading from the N-terminus, the 61-residue chain is Large ribosomal subunit protein bL32 (61 aa).

The segment covering 1 to 19 (MAHPKRRQSKTRTAKRRTH) has biased composition (basic residues). Residues 1–20 (MAHPKRRQSKTRTAKRRTHD) are disordered.

This sequence belongs to the bacterial ribosomal protein bL32 family.

This chain is Large ribosomal subunit protein bL32, found in Bacteroides fragilis (strain YCH46).